Consider the following 822-residue polypeptide: Penicillin-binding protein 1A (822 aa).

The Cytoplasmic segment spans residues 1-5 (MRLLK). The helical; Signal-anchor for type II membrane protein transmembrane segment at 6–26 (FLWWTCVTLICGVLLSFSGAY) threads the bilayer. At 27-822 (LYLSPSLPSV…DDEGAPIDLF (796 aa)) the chain is on the periplasmic side. A transglycosylase region spans residues 48 to 216 (LKVYSEDGKL…SRYNPLVNPT (169 aa)). Residue Glu86 is the Proton donor; for transglycosylase activity of the active site. The interval 403 to 744 (IRVQRQEDGT…GTVALPIWIR (342 aa)) is transpeptidase. Ser461 serves as the catalytic Acyl-ester intermediate; for transpeptidase activity. Disordered regions lie at residues 614-654 (AADA…FEPT) and 790-822 (KNEDTPPSVNELPPGSFPGSPLPDDEGAPIDLF). Positions 812-822 (PDDEGAPIDLF) are enriched in acidic residues.

The protein in the N-terminal section; belongs to the glycosyltransferase 51 family. This sequence in the C-terminal section; belongs to the transpeptidase family.

The protein resides in the cell inner membrane. It carries out the reaction [GlcNAc-(1-&gt;4)-Mur2Ac(oyl-L-Ala-gamma-D-Glu-L-Lys-D-Ala-D-Ala)](n)-di-trans,octa-cis-undecaprenyl diphosphate + beta-D-GlcNAc-(1-&gt;4)-Mur2Ac(oyl-L-Ala-gamma-D-Glu-L-Lys-D-Ala-D-Ala)-di-trans,octa-cis-undecaprenyl diphosphate = [GlcNAc-(1-&gt;4)-Mur2Ac(oyl-L-Ala-gamma-D-Glu-L-Lys-D-Ala-D-Ala)](n+1)-di-trans,octa-cis-undecaprenyl diphosphate + di-trans,octa-cis-undecaprenyl diphosphate + H(+). It catalyses the reaction Preferential cleavage: (Ac)2-L-Lys-D-Ala-|-D-Ala. Also transpeptidation of peptidyl-alanyl moieties that are N-acyl substituents of D-alanine.. Its pathway is cell wall biogenesis; peptidoglycan biosynthesis. Cell wall formation. Synthesis of cross-linked peptidoglycan from the lipid intermediates. The enzyme has a penicillin-insensitive transglycosylase N-terminal domain (formation of linear glycan strands) and a penicillin-sensitive transpeptidase C-terminal domain (cross-linking of the peptide subunits). In Pseudomonas aeruginosa (strain ATCC 15692 / DSM 22644 / CIP 104116 / JCM 14847 / LMG 12228 / 1C / PRS 101 / PAO1), this protein is Penicillin-binding protein 1A (mrcA).